The primary structure comprises 407 residues: Arginine biosynthesis bifunctional protein ArgJ (407 aa).

The substrate site is built by T157, K183, T194, E280, N402, and T407. T194 serves as the catalytic Nucleophile.

This sequence belongs to the ArgJ family. As to quaternary structure, heterotetramer of two alpha and two beta chains.

The protein resides in the cytoplasm. It catalyses the reaction N(2)-acetyl-L-ornithine + L-glutamate = N-acetyl-L-glutamate + L-ornithine. The catalysed reaction is L-glutamate + acetyl-CoA = N-acetyl-L-glutamate + CoA + H(+). It functions in the pathway amino-acid biosynthesis; L-arginine biosynthesis; L-ornithine and N-acetyl-L-glutamate from L-glutamate and N(2)-acetyl-L-ornithine (cyclic): step 1/1. Its pathway is amino-acid biosynthesis; L-arginine biosynthesis; N(2)-acetyl-L-ornithine from L-glutamate: step 1/4. Functionally, catalyzes two activities which are involved in the cyclic version of arginine biosynthesis: the synthesis of N-acetylglutamate from glutamate and acetyl-CoA as the acetyl donor, and of ornithine by transacetylation between N(2)-acetylornithine and glutamate. This is Arginine biosynthesis bifunctional protein ArgJ from Bacillus anthracis.